Reading from the N-terminus, the 282-residue chain is Formamidopyrimidine-DNA glycosylase (282 aa).

Pro2 (schiff-base intermediate with DNA) is an active-site residue. Glu3 functions as the Proton donor in the catalytic mechanism. The active-site Proton donor; for beta-elimination activity is the Lys60. DNA contacts are provided by His99, Arg118, and Lys163. The FPG-type zinc-finger motif lies at 248 to 282 (LVYRRSGKNCKKCGEKILREKICGRSTHWCPNCQK). Arg272 functions as the Proton donor; for delta-elimination activity in the catalytic mechanism.

It belongs to the FPG family. In terms of assembly, monomer. Requires Zn(2+) as cofactor.

It carries out the reaction Hydrolysis of DNA containing ring-opened 7-methylguanine residues, releasing 2,6-diamino-4-hydroxy-5-(N-methyl)formamidopyrimidine.. It catalyses the reaction 2'-deoxyribonucleotide-(2'-deoxyribose 5'-phosphate)-2'-deoxyribonucleotide-DNA = a 3'-end 2'-deoxyribonucleotide-(2,3-dehydro-2,3-deoxyribose 5'-phosphate)-DNA + a 5'-end 5'-phospho-2'-deoxyribonucleoside-DNA + H(+). In terms of biological role, involved in base excision repair of DNA damaged by oxidation or by mutagenic agents. Acts as a DNA glycosylase that recognizes and removes damaged bases. Has a preference for oxidized purines, such as 7,8-dihydro-8-oxoguanine (8-oxoG). Has AP (apurinic/apyrimidinic) lyase activity and introduces nicks in the DNA strand. Cleaves the DNA backbone by beta-delta elimination to generate a single-strand break at the site of the removed base with both 3'- and 5'-phosphates. This Prochlorococcus marinus (strain NATL1A) protein is Formamidopyrimidine-DNA glycosylase.